A 396-amino-acid chain; its full sequence is Alanine racemase (396 aa).

Catalysis depends on lysine 46, which acts as the Proton acceptor; specific for D-alanine. Position 46 is an N6-(pyridoxal phosphate)lysine (lysine 46). Residue arginine 145 participates in substrate binding. Tyrosine 280 acts as the Proton acceptor; specific for L-alanine in catalysis. Methionine 328 contacts substrate.

It belongs to the alanine racemase family. Pyridoxal 5'-phosphate is required as a cofactor.

The enzyme catalyses L-alanine = D-alanine. Its pathway is amino-acid biosynthesis; D-alanine biosynthesis; D-alanine from L-alanine: step 1/1. In terms of biological role, catalyzes the interconversion of L-alanine and D-alanine. May also act on other amino acids. This chain is Alanine racemase (alr), found in Brucella abortus (strain 2308).